Reading from the N-terminus, the 344-residue chain is Geranylgeranyl transferase type-2 subunit alpha (344 aa).

6 PFTA repeats span residues tyrosine 44 to phenylalanine 78, leucine 89 to tyrosine 123, asparagine 125 to arginine 159, leucine 165 to asparagine 199, isoleucine 214 to proline 248, and tyrosine 266 to asparagine 293.

It belongs to the protein prenyltransferase subunit alpha family. Heterodimer of an alpha and a beta subunit.

The catalysed reaction is geranylgeranyl diphosphate + L-cysteinyl-[protein] = S-geranylgeranyl-L-cysteinyl-[protein] + diphosphate. In terms of biological role, catalyzes the transfer of a geranyl-geranyl moiety from geranyl-geranyl pyrophosphate to proteins having the C-terminal-XCC or -XCXC, where both cysteines may become modified. The sequence is that of Geranylgeranyl transferase type-2 subunit alpha (bet4) from Schizosaccharomyces pombe (strain 972 / ATCC 24843) (Fission yeast).